The following is a 75-amino-acid chain: DNA-directed RNA polymerase subunit omega (75 aa).

Belongs to the RNA polymerase subunit omega family. As to quaternary structure, in cyanobacteria the RNAP catalytic core is composed of 2 alpha, 1 beta, 1 beta', 1 gamma and 1 omega subunit. When a sigma factor is associated with the core the holoenzyme is formed, which can initiate transcription.

The enzyme catalyses RNA(n) + a ribonucleoside 5'-triphosphate = RNA(n+1) + diphosphate. Functionally, promotes RNA polymerase assembly. Latches the N- and C-terminal regions of the beta' subunit thereby facilitating its interaction with the beta and alpha subunits. This is DNA-directed RNA polymerase subunit omega from Parasynechococcus marenigrum (strain WH8102).